A 2898-amino-acid chain; its full sequence is Papilin (2898 aa).

The signal sequence occupies residues 1-26 (MDLSRRLCSTALVAFIVLASIHDSQS). Residues 43–67 (LPESSVTPGGEGNDPDEWTPWSSPS) are disordered. One can recognise a TSP type-1 1 domain in the interval 57–111 (PDEWTPWSSPSDCSRTCGGGVSYQTRECLRRDDRGEAVCSGGSRRYFSCNTQDCP). Disulfide bonds link Cys-69/Cys-105, Cys-73/Cys-110, and Cys-84/Cys-95. Asn-258 and Asn-319 each carry an N-linked (GlcNAc...) asparagine glycan. One can recognise a TSP type-1 2 domain in the interval 338 to 397 (DTHTWTHHQFNACSASCGGGSQSRKVTCNNRITLAEVNPSLCDQKSKPVEEQACGTEPCA). N-linked (GlcNAc...) asparagine glycosylation is present at Asn-419. TSP type-1 domains lie at 461–521 (NCPK…TPCE), 522–575 (GVDW…KSPK), 576–633 (CEAQ…QDCE), and 639–694 (CPGE…EACT). Intrachain disulfides connect Cys-462/Cys-504, Cys-473/Cys-515, and Cys-477/Cys-520. Residue Asn-669 is glycosylated (N-linked (GlcNAc...) asparagine). Disordered regions lie at residues 699 to 1252 (LPLT…CAKS) and 1323 to 1367 (GEND…PDTK). Composition is skewed to acidic residues over residues 708–720 (IEDD…EDGI) and 727–738 (LSDDEKSEDVID). The span at 768–788 (STGTTFEGSGYDSESTTDSGI) shows a compositional bias: polar residues. The segment covering 801 to 879 (EASTDLSSST…ASASESTDVS (79 aa)) has biased composition (low complexity). Residues Asn-889, Asn-914, Asn-917, Asn-950, and Asn-1064 are each glycosylated (N-linked (GlcNAc...) asparagine). A compositionally biased stretch (low complexity) spans 890-1053 (ASDSTPESST…SDNTDITTDG (164 aa)). Over residues 1064 to 1073 (NASTEGSTEG) the composition is skewed to polar residues. 2 stretches are compositionally biased toward low complexity: residues 1076–1091 (EDTT…TEST) and 1104–1215 (STVE…IWST). Positions 1237–1248 (SKPRKCKPKKST) are enriched in basic residues. Residues 1330-1351 (PETTTVPPTTTTEETQPETTTE) show a composition bias toward low complexity. 2 N-linked (GlcNAc...) asparagine glycosylation sites follow: Asn-1489 and Asn-1623. Disulfide bonds link Cys-1612–Cys-1662, Cys-1621–Cys-1645, Cys-1637–Cys-1658, Cys-1671–Cys-1721, Cys-1680–Cys-1704, Cys-1696–Cys-1717, Cys-1730–Cys-1780, Cys-1739–Cys-1763, Cys-1755–Cys-1776, Cys-1790–Cys-1840, Cys-1799–Cys-1823, Cys-1815–Cys-1836, Cys-1849–Cys-1899, Cys-1858–Cys-1882, and Cys-1874–Cys-1895. 5 BPTI/Kunitz inhibitor domains span residues 1612–1662 (CGLP…KDTC), 1671–1721 (CLLP…QGTC), 1730–1780 (CEQP…NYNC), 1790–1840 (CALP…EDHC), and 1849–1899 (CEIP…LARC). Asn-1750 carries N-linked (GlcNAc...) asparagine glycosylation. Residues 1902 to 1928 (KPEPTTTTPATRPQPSRQDVCDEEPAP) form a disordered region. Over residues 1905-1916 (PTTTTPATRPQP) the composition is skewed to low complexity. Cystine bridges form between Cys-1922–Cys-1972, Cys-1931–Cys-1955, and Cys-1947–Cys-1968. Residues 1922–1972 (CDEEPAPGECSTWVLKWHFDRKIGACRQFYYGNCGGNGNRFETENDCQQRC) enclose the BPTI/Kunitz inhibitor 6 domain. The interval 1972–2004 (CLSQEPPAPTPPRAPAPTRQPDPAPTVAQCSQP) is disordered. The span at 1977–1995 (PPAPTPPRAPAPTRQPDPA) shows a compositional bias: pro residues. Cystine bridges form between Cys-2001/Cys-2051, Cys-2010/Cys-2034, Cys-2026/Cys-2047, Cys-2071/Cys-2121, Cys-2080/Cys-2104, Cys-2096/Cys-2117, Cys-2128/Cys-2178, Cys-2137/Cys-2161, Cys-2153/Cys-2174, Cys-2194/Cys-2244, Cys-2203/Cys-2227, Cys-2219/Cys-2240, Cys-2253/Cys-2303, Cys-2262/Cys-2286, Cys-2278/Cys-2299, Cys-2318/Cys-2371, Cys-2327/Cys-2354, and Cys-2346/Cys-2367. BPTI/Kunitz inhibitor domains follow at residues 2001–2051 (CSQP…SARC), 2071–2121 (CFLA…QNEC), 2128–2178 (CALP…LNFC), 2194–2244 (CAEP…ERQC), 2253–2303 (CNEP…QTVC), and 2318–2371 (CLLP…TNQC). Asn-2020 carries an N-linked (GlcNAc...) asparagine glycan. The N-linked (GlcNAc...) asparagine glycan is linked to Asn-2083. N-linked (GlcNAc...) asparagine glycosylation occurs at Asn-2205. Residues 2452-2498 (DIYKPGECPALSANASGCARECYTDADCRGDNKCCSDGCGQLCVHPA) form the WAP domain. N-linked (GlcNAc...) asparagine glycans are attached at residues Asn-2465, Asn-2552, and Asn-2625. Ig-like C2-type domains follow at residues 2523-2607 (PKEA…REVA), 2617-2697 (PAYI…RPVS), and 2749-2840 (PTVN…ANVS). Cys-2543 and Cys-2592 are oxidised to a cystine. 2 disulfides stabilise this stretch: Cys-2640–Cys-2687 and Cys-2775–Cys-2824. N-linked (GlcNAc...) asparagine glycans are attached at residues Asn-2784 and Asn-2838. The region spanning 2847–2886 (VSPECVDNPYFANCKLIVKGRYCSNPYYTQFCCRSCTLAG) is the PLAC domain.

This sequence belongs to the papilin family. In terms of assembly, homooligomer; disulfide-linked. Post-translationally, N-glycosylated. Sulfated. As to expression, during embryogenesis it first appears in the extracellular matrix during gastrulation and early mesoderm development at sites where basement membranes do not subsequently form. Later, migrating hemocytes prominently produce it together with other ECM components, in basement membranes that underlie epithelia and envelop muscles and emerging organs. At various life stages, it can be synthesized by other cells, such as those of the fat body, and it also occurs in a few, circumscribed regions of relatively amorphous ECM. Isoform E is specifically expressed in ECM of heart and proventriculus. Isoform C is a major component of transitory ECM deposit in the early embryo. Isoform F is a major component of the basement membrane during embryogenesis.

The protein localises to the secreted. It localises to the extracellular space. It is found in the extracellular matrix. Its subcellular location is the basement membrane. In terms of biological role, essential extracellular matrix (ECM) protein that influences cell rearrangements. May act by modulating metalloproteinases action during organogenesis. Able to non-competitively inhibit procollagen N-proteinase, an ADAMTS metalloproteinase. The chain is Papilin (Ppn) from Drosophila melanogaster (Fruit fly).